Here is a 219-residue protein sequence, read N- to C-terminus: tRNA (guanine-N(7)-)-methyltransferase (219 aa).

Residues Glu-43, Asp-68, Glu-101, and Asn-124 each contribute to the S-adenosyl-L-methionine site. Substrate-binding residues include Lys-128 and Asp-160.

The protein belongs to the class I-like SAM-binding methyltransferase superfamily. TrmB family.

The catalysed reaction is guanosine(46) in tRNA + S-adenosyl-L-methionine = N(7)-methylguanosine(46) in tRNA + S-adenosyl-L-homocysteine. It functions in the pathway tRNA modification; N(7)-methylguanine-tRNA biosynthesis. In terms of biological role, catalyzes the formation of N(7)-methylguanine at position 46 (m7G46) in tRNA. The polypeptide is tRNA (guanine-N(7)-)-methyltransferase (Clostridium botulinum (strain Alaska E43 / Type E3)).